Reading from the N-terminus, the 189-residue chain is MTEYKLVIVGGGGVGKSALTIQLIQNHFIDEYDPTIEDSYRKQVTIDEETCLLDILDTAGQEEYSAMRDQYMRTGQGFLCVYSITSRSSFDEIASFREQILRVKDKDKVPMIVVGNKCDLEGERQVTTGEGQDLARSFGCPFMETSAKSRVNVEESFYQLVREIRKDSRTDTKGPGGKGGKKTLKCLLL.

GTP is bound at residue 10-17 (GGGGVGKS). The short motif at 32 to 40 (YDPTIEDSY) is the Effector region element. GTP is bound by residues 57 to 61 (DTAGQ) and 116 to 119 (NKCD). Cys186 is modified (cysteine methyl ester). Cys186 carries the S-geranylgeranyl cysteine lipid modification. Positions 187 to 189 (LLL) are cleaved as a propeptide — removed in mature form.

The protein belongs to the small GTPase superfamily. Ras family.

It is found in the cell membrane. It catalyses the reaction GTP + H2O = GDP + phosphate + H(+). Its function is as follows. Ras proteins bind GDP/GTP and possess intrinsic GTPase activity. The protein is Ras-like protein 1 (RAS1) of Physarum polycephalum (Slime mold).